Consider the following 69-residue polypeptide: Photosystem I reaction center subunit IV (69 aa).

The protein belongs to the PsaE family.

Its subcellular location is the cellular thylakoid membrane. Its function is as follows. Stabilizes the interaction between PsaC and the PSI core, assists the docking of the ferredoxin to PSI and interacts with ferredoxin-NADP oxidoreductase. The sequence is that of Photosystem I reaction center subunit IV from Prochlorococcus marinus (strain MIT 9515).